The sequence spans 181 residues: Probable nicotinate-nucleotide adenylyltransferase (181 aa).

It belongs to the NadD family.

The catalysed reaction is nicotinate beta-D-ribonucleotide + ATP + H(+) = deamido-NAD(+) + diphosphate. It functions in the pathway cofactor biosynthesis; NAD(+) biosynthesis; deamido-NAD(+) from nicotinate D-ribonucleotide: step 1/1. Catalyzes the reversible adenylation of nicotinate mononucleotide (NaMN) to nicotinic acid adenine dinucleotide (NaAD). This Campylobacter jejuni subsp. jejuni serotype O:23/36 (strain 81-176) protein is Probable nicotinate-nucleotide adenylyltransferase.